The chain runs to 457 residues: Acetylcholine receptor subunit alpha (457 aa).

The signal sequence occupies residues 1 to 20 (MELSTVLLLLGLCSAGLVLG). Residues 21–230 (SEHETRLVAK…ITYHFVMQRL (210 aa)) are Extracellular-facing. 2 disulfide bridges follow: Cys148-Cys162 and Cys212-Cys213. N-linked (GlcNAc...) asparagine glycosylation is present at Asn161. Helical transmembrane passes span 231-255 (PLYF…VFYL), 263-281 (MTLS…LVIV), and 297-316 (YMLF…VIVI). Residues 317–428 (NTHHRSPSTH…WKYVAMVMDH (112 aa)) are Cytoplasmic-facing. A helical membrane pass occupies residues 429–447 (ILLGVFMLVCLIGTLAVFA).

It belongs to the ligand-gated ion channel (TC 1.A.9) family. Acetylcholine receptor (TC 1.A.9.1) subfamily. Alpha-1/CHRNA1 sub-subfamily. As to quaternary structure, one of the alpha chains that assemble within the acetylcholine receptor, a pentamer of two alpha chains, a beta, a delta, and a gamma (in immature muscle) or epsilon (in mature muscle) chains. The muscle heteropentamer composed of alpha-1, beta-1, delta, epsilon subunits interacts with the alpha-conotoxin ImII.

It localises to the postsynaptic cell membrane. It is found in the cell membrane. It catalyses the reaction K(+)(in) = K(+)(out). The enzyme catalyses Na(+)(in) = Na(+)(out). Upon acetylcholine binding, the AChR responds by an extensive change in conformation that affects all subunits and leads to opening of an ion-conducting channel across the plasma membrane. This Mus musculus (Mouse) protein is Acetylcholine receptor subunit alpha (Chrna1).